The primary structure comprises 141 residues: Large ribosomal subunit protein uL16 (141 aa).

Belongs to the universal ribosomal protein uL16 family. In terms of assembly, part of the 50S ribosomal subunit.

Functionally, binds 23S rRNA and is also seen to make contacts with the A and possibly P site tRNAs. In Campylobacter lari (strain RM2100 / D67 / ATCC BAA-1060), this protein is Large ribosomal subunit protein uL16.